The sequence spans 342 residues: Uroporphyrinogen decarboxylase (342 aa).

Residues 26–30 (RQAGR), Asp-76, Tyr-150, Ser-205, and His-321 contribute to the substrate site.

It belongs to the uroporphyrinogen decarboxylase family. In terms of assembly, homodimer.

The protein localises to the cytoplasm. The catalysed reaction is uroporphyrinogen III + 4 H(+) = coproporphyrinogen III + 4 CO2. It functions in the pathway porphyrin-containing compound metabolism; protoporphyrin-IX biosynthesis; coproporphyrinogen-III from 5-aminolevulinate: step 4/4. Functionally, catalyzes the decarboxylation of four acetate groups of uroporphyrinogen-III to yield coproporphyrinogen-III. This chain is Uroporphyrinogen decarboxylase, found in Sphingopyxis alaskensis (strain DSM 13593 / LMG 18877 / RB2256) (Sphingomonas alaskensis).